Consider the following 704-residue polypeptide: Chloride intracellular channel protein 6 (704 aa).

Residues 1-13 (MAEAAEPEGVAPG) are compositionally biased toward low complexity. The tract at residues 1-446 (MAEAAEPEGV…EDGEASEPRA (446 aa)) is disordered. Over residues 39–48 (EGPEGSEGAE) the composition is skewed to acidic residues. Position 44 is a phosphoserine (Ser-44). The segment covering 67-83 (RGPEAEARGTRGAHGET) has biased composition (basic and acidic residues). Residues 90 to 100 (PEGAEVPQGGE) are compositionally biased toward low complexity. The span at 121–147 (PRGEAQREPEDSAAPERQEEAEQRPEV) shows a compositional bias: basic and acidic residues. Tandem repeats lie at residues 157 to 166 (GDSVDAEGPL), 167 to 176 (GDNIEAEGPA), 177 to 186 (GDSVEAEGRV), 187 to 196 (GDSVDAEGPA), 197 to 206 (GDSVDAEGPL), 207 to 216 (GDNIQAEGPA), 217 to 226 (GDSVDAEGRV), 227 to 236 (GDSVDAEGPA), 237 to 246 (GDSVDAEGRV), 247 to 256 (GDSVEAGDPA), 257 to 266 (GDGVEAGVPA), 267 to 276 (GDSVEAEGPA), and 277 to 286 (GDSMDAEGPA). Residues 157-282 (GDSVDAEGPL…EGPAGDSMDA (126 aa)) are 13 X 10 AA tandem repeat of G-D-[SNG]-[VIM]-[DEQ]-A-[EAG]-[GDVE]-[PRG]-[LAVP]. The segment covering 295 to 306 (EPQQSGDGSLSP) has biased composition (polar residues). Composition is skewed to basic and acidic residues over residues 350-360 (ARADAGEDRVG) and 371-385 (EERR…REEE). 2 positions are modified to phosphoserine: Ser-397 and Ser-442. Basic and acidic residues predominate over residues 434–446 (GRREDGEASEPRA). The short motif at 487–490 (CPFS) is the G-site element. A helical membrane pass occupies residues 489 to 509 (FSQRLFMILWLKGVIFNVTTV). One can recognise a GST C-terminal domain in the interval 556–704 (YPKLGTQHPE…AYSDVAKRMK (149 aa)).

This sequence belongs to the chloride channel CLIC family. As to quaternary structure, monomer (soluble state). Interacts with dopamine receptors DRD2, DRD3 and DRD4. Post-translationally, phosphorylated. As to expression, expressed in brain, placenta, pancreas, liver, lung, heart, kidney, liver, spleen, soleus muscle, and brown fat.

It localises to the cytoplasm. It is found in the cell membrane. It carries out the reaction chloride(in) = chloride(out). With respect to regulation, channel activity is redox- and pH-regulated. Inhibited by IAA-94. In the soluble state, catalyzes glutaredoxin-like thiol disulfide exchange reactions with reduced glutathione as electron donor. Can insert into membranes and form voltage-dependent chloride-selective channels. The channel opens upon membrane depolarization at positive voltages and closes at negative membrane voltages. May play a critical role in water-secreting cells, possibly through the regulation of chloride ion transport. The sequence is that of Chloride intracellular channel protein 6 from Homo sapiens (Human).